A 360-amino-acid chain; its full sequence is Phosphate acyltransferase (360 aa).

This sequence belongs to the PlsX family. In terms of assembly, homodimer. Probably interacts with PlsY.

It localises to the cytoplasm. The catalysed reaction is a fatty acyl-[ACP] + phosphate = an acyl phosphate + holo-[ACP]. It functions in the pathway lipid metabolism; phospholipid metabolism. In terms of biological role, catalyzes the reversible formation of acyl-phosphate (acyl-PO(4)) from acyl-[acyl-carrier-protein] (acyl-ACP). This enzyme utilizes acyl-ACP as fatty acyl donor, but not acyl-CoA. In Caulobacter vibrioides (strain ATCC 19089 / CIP 103742 / CB 15) (Caulobacter crescentus), this protein is Phosphate acyltransferase.